Reading from the N-terminus, the 122-residue chain is Small ribosomal subunit protein uS13 (122 aa).

The segment at 96-122 is disordered; that stretch reads PVRGQRTRTNARTRKGPKKTVGVRRAK.

This sequence belongs to the universal ribosomal protein uS13 family. Part of the 30S ribosomal subunit. Forms a loose heterodimer with protein S19. Forms two bridges to the 50S subunit in the 70S ribosome.

Located at the top of the head of the 30S subunit, it contacts several helices of the 16S rRNA. In the 70S ribosome it contacts the 23S rRNA (bridge B1a) and protein L5 of the 50S subunit (bridge B1b), connecting the 2 subunits; these bridges are implicated in subunit movement. Contacts the tRNAs in the A and P-sites. The chain is Small ribosomal subunit protein uS13 from Halothermothrix orenii (strain H 168 / OCM 544 / DSM 9562).